We begin with the raw amino-acid sequence, 284 residues long: 2-dehydro-3-deoxyphosphooctonate aldolase (284 aa).

It belongs to the KdsA family.

Its subcellular location is the cytoplasm. The enzyme catalyses D-arabinose 5-phosphate + phosphoenolpyruvate + H2O = 3-deoxy-alpha-D-manno-2-octulosonate-8-phosphate + phosphate. Its pathway is carbohydrate biosynthesis; 3-deoxy-D-manno-octulosonate biosynthesis; 3-deoxy-D-manno-octulosonate from D-ribulose 5-phosphate: step 2/3. The protein operates within bacterial outer membrane biogenesis; lipopolysaccharide biosynthesis. This is 2-dehydro-3-deoxyphosphooctonate aldolase from Mannheimia succiniciproducens (strain KCTC 0769BP / MBEL55E).